The sequence spans 354 residues: Probable protein phosphatase 2C 27 (354 aa).

The PPM-type phosphatase domain occupies 54 to 319 (RSGDWSDIGG…DNLTAVMVSF (266 aa)). Asp98, Gly99, Asp267, and Asp310 together coordinate Mn(2+).

This sequence belongs to the PP2C family. Mg(2+) is required as a cofactor. It depends on Mn(2+) as a cofactor.

The catalysed reaction is O-phospho-L-seryl-[protein] + H2O = L-seryl-[protein] + phosphate. It carries out the reaction O-phospho-L-threonyl-[protein] + H2O = L-threonyl-[protein] + phosphate. The sequence is that of Probable protein phosphatase 2C 27 from Oryza sativa subsp. japonica (Rice).